The chain runs to 329 residues: BTB/POZ domain-containing adapter for CUL3-mediated RhoA degradation protein 1 (329 aa).

The disordered stretch occupies residues 1 to 31 (MSAEASGPAPAAAECLESPSPSSVEPGSPSY). The BTB domain maps to 41-109 (KYVKLNVGGS…LRDGSVPLPE (69 aa)).

This sequence belongs to the BACURD family. In terms of assembly, homotetramer; forms a two-fold symmetric tetramer in solution. Interacts with CUL3; interaction is direct and forms a 5:5 heterodecamer. Component of the BCR(KCTD13) E3 ubiquitin ligase complex, at least composed of CUL3, KCTD13/BACURD1 and RBX1. Interacts with RHOA; with a preference for RhoA-GDP. Interacts with POLD2 and PCNA. Interacts with SPRTN.

The protein localises to the nucleus. It functions in the pathway protein modification; protein ubiquitination. In terms of biological role, substrate-specific adapter of a BCR (BTB-CUL3-RBX1) E3 ubiquitin-protein ligase complex required for synaptic transmission. The BCR(KCTD13) E3 ubiquitin ligase complex mediates the ubiquitination of RHOA, leading to its degradation by the proteasome, thereby regulating the actin cytoskeleton and promoting synaptic transmission. The sequence is that of BTB/POZ domain-containing adapter for CUL3-mediated RhoA degradation protein 1 (Kctd13) from Mus musculus (Mouse).